We begin with the raw amino-acid sequence, 111 residues long: Large ribosomal subunit protein uL22 (111 aa).

The protein belongs to the universal ribosomal protein uL22 family. As to quaternary structure, part of the 50S ribosomal subunit.

This protein binds specifically to 23S rRNA; its binding is stimulated by other ribosomal proteins, e.g. L4, L17, and L20. It is important during the early stages of 50S assembly. It makes multiple contacts with different domains of the 23S rRNA in the assembled 50S subunit and ribosome. Functionally, the globular domain of the protein is located near the polypeptide exit tunnel on the outside of the subunit, while an extended beta-hairpin is found that lines the wall of the exit tunnel in the center of the 70S ribosome. The chain is Large ribosomal subunit protein uL22 from Chlamydia abortus (strain DSM 27085 / S26/3) (Chlamydophila abortus).